A 95-amino-acid polypeptide reads, in one-letter code: UPF0235 protein AnaeK_1146 (95 aa).

Belongs to the UPF0235 family.

The protein is UPF0235 protein AnaeK_1146 of Anaeromyxobacter sp. (strain K).